The chain runs to 466 residues: tRNA-2-methylthio-N(6)-dimethylallyladenosine synthase (466 aa).

Residues 22–139 (RRYYVWTVGC…VVALAPNPIY (118 aa)) enclose the MTTase N-terminal domain. Residues Cys31, Cys67, Cys101, Cys166, Cys170, and Cys173 each coordinate [4Fe-4S] cluster. The Radical SAM core domain maps to 152-386 (SHPPVSVHVP…EQLQEQIATE (235 aa)). The TRAM domain occupies 389 to 449 (ARFLGQTVEV…PWSLQGVPQL (61 aa)).

The protein belongs to the methylthiotransferase family. MiaB subfamily. Monomer. It depends on [4Fe-4S] cluster as a cofactor.

The protein localises to the cytoplasm. The enzyme catalyses N(6)-dimethylallyladenosine(37) in tRNA + (sulfur carrier)-SH + AH2 + 2 S-adenosyl-L-methionine = 2-methylsulfanyl-N(6)-dimethylallyladenosine(37) in tRNA + (sulfur carrier)-H + 5'-deoxyadenosine + L-methionine + A + S-adenosyl-L-homocysteine + 2 H(+). In terms of biological role, catalyzes the methylthiolation of N6-(dimethylallyl)adenosine (i(6)A), leading to the formation of 2-methylthio-N6-(dimethylallyl)adenosine (ms(2)i(6)A) at position 37 in tRNAs that read codons beginning with uridine. This chain is tRNA-2-methylthio-N(6)-dimethylallyladenosine synthase, found in Chloroflexus aurantiacus (strain ATCC 29366 / DSM 635 / J-10-fl).